The primary structure comprises 346 residues: Holliday junction branch migration complex subunit RuvB (346 aa).

The interval 2 to 183 (TDDRIIGAGA…FGIVQRLEFY (182 aa)) is large ATPase domain (RuvB-L). ATP contacts are provided by residues I22, R23, G64, K67, T68, T69, 130-132 (EDF), R173, Y183, and R220. Residue T68 coordinates Mg(2+). The interval 184–254 (SVEELTRIVR…VAQAAMKMLK (71 aa)) is small ATPAse domain (RuvB-S). Residues 257 to 346 (PEGFDELDRR…DLFAEVPDVG (90 aa)) are head domain (RuvB-H). DNA contacts are provided by R293, R312, and R317.

It belongs to the RuvB family. Homohexamer. Forms an RuvA(8)-RuvB(12)-Holliday junction (HJ) complex. HJ DNA is sandwiched between 2 RuvA tetramers; dsDNA enters through RuvA and exits via RuvB. An RuvB hexamer assembles on each DNA strand where it exits the tetramer. Each RuvB hexamer is contacted by two RuvA subunits (via domain III) on 2 adjacent RuvB subunits; this complex drives branch migration. In the full resolvosome a probable DNA-RuvA(4)-RuvB(12)-RuvC(2) complex forms which resolves the HJ.

It localises to the cytoplasm. It carries out the reaction ATP + H2O = ADP + phosphate + H(+). The RuvA-RuvB-RuvC complex processes Holliday junction (HJ) DNA during genetic recombination and DNA repair, while the RuvA-RuvB complex plays an important role in the rescue of blocked DNA replication forks via replication fork reversal (RFR). RuvA specifically binds to HJ cruciform DNA, conferring on it an open structure. The RuvB hexamer acts as an ATP-dependent pump, pulling dsDNA into and through the RuvAB complex. RuvB forms 2 homohexamers on either side of HJ DNA bound by 1 or 2 RuvA tetramers; 4 subunits per hexamer contact DNA at a time. Coordinated motions by a converter formed by DNA-disengaged RuvB subunits stimulates ATP hydrolysis and nucleotide exchange. Immobilization of the converter enables RuvB to convert the ATP-contained energy into a lever motion, pulling 2 nucleotides of DNA out of the RuvA tetramer per ATP hydrolyzed, thus driving DNA branch migration. The RuvB motors rotate together with the DNA substrate, which together with the progressing nucleotide cycle form the mechanistic basis for DNA recombination by continuous HJ branch migration. Branch migration allows RuvC to scan DNA until it finds its consensus sequence, where it cleaves and resolves cruciform DNA. The sequence is that of Holliday junction branch migration complex subunit RuvB from Stenotrophomonas maltophilia (strain K279a).